The following is a 243-amino-acid chain: UPF0246 protein SAK_2020 (243 aa).

This sequence belongs to the UPF0246 family.

The chain is UPF0246 protein SAK_2020 from Streptococcus agalactiae serotype Ia (strain ATCC 27591 / A909 / CDC SS700).